Consider the following 101-residue polypeptide: NAD(P)H-quinone oxidoreductase subunit 4L, chloroplastic (101 aa).

Transmembrane regions (helical) follow at residues 2–22 (ILEH…YGLI), 32–52 (MCLE…SDFF), and 61–81 (IFSI…LAIV).

Belongs to the complex I subunit 4L family. In terms of assembly, NDH is composed of at least 16 different subunits, 5 of which are encoded in the nucleus.

It is found in the plastid. The protein resides in the chloroplast thylakoid membrane. It catalyses the reaction a plastoquinone + NADH + (n+1) H(+)(in) = a plastoquinol + NAD(+) + n H(+)(out). The enzyme catalyses a plastoquinone + NADPH + (n+1) H(+)(in) = a plastoquinol + NADP(+) + n H(+)(out). Functionally, NDH shuttles electrons from NAD(P)H:plastoquinone, via FMN and iron-sulfur (Fe-S) centers, to quinones in the photosynthetic chain and possibly in a chloroplast respiratory chain. The immediate electron acceptor for the enzyme in this species is believed to be plastoquinone. Couples the redox reaction to proton translocation, and thus conserves the redox energy in a proton gradient. The protein is NAD(P)H-quinone oxidoreductase subunit 4L, chloroplastic of Oenothera argillicola (Appalachian evening primrose).